Consider the following 242-residue polypeptide: DNA repair protein RecO (242 aa).

This sequence belongs to the RecO family. As to quaternary structure, monomer.

In terms of biological role, involved in DNA repair and RecF pathway recombination. This is DNA repair protein RecO from Salmonella dublin (strain CT_02021853).